We begin with the raw amino-acid sequence, 371 residues long: Maltose/maltodextrin import ATP-binding protein MalK (371 aa).

The ABC transporter domain occupies 4–234 (VTLKNVCKAY…PENRFVAGFI (231 aa)). Position 36-43 (36-43 (GPSGCGKS)) interacts with ATP.

This sequence belongs to the ABC transporter superfamily. Maltooligosaccharide importer (TC 3.A.1.1.1) family. As to quaternary structure, the complex is composed of two ATP-binding proteins (MalK), two transmembrane proteins (MalG and MalK) and a solute-binding protein (MalE).

The protein localises to the cell inner membrane. The catalysed reaction is D-maltose(out) + ATP + H2O = D-maltose(in) + ADP + phosphate + H(+). Functionally, part of the ABC transporter complex MalEFGK involved in maltose/maltodextrin import. Responsible for energy coupling to the transport system. The sequence is that of Maltose/maltodextrin import ATP-binding protein MalK from Vibrio vulnificus (strain CMCP6).